Here is a 236-residue protein sequence, read N- to C-terminus: T-cell surface glycoprotein CD8 alpha chain (236 aa).

The N-terminal stretch at 1–26 is a signal peptide; the sequence is MASRVICFLSLNLLLLDVITRLQVSG. An Ig-like V-type domain is found at 27–130; sequence QLQLSPKKVD…ITSNSVMYFS (104 aa). The Extracellular segment spans residues 27-189; sequence QLQLSPKKVD…MGLGFACDIY (163 aa). A disulfide bridge connects residues Cys-47 and Cys-119. A glycan (N-linked (GlcNAc...) asparagine) is linked at Asn-63. Thr-144 carries O-linked (GalNAc...) threonine; partial glycosylation. 4 O-linked (GalNAc...) threonine glycosylation sites follow: Thr-148, Thr-152, Thr-158, and Thr-160. Residues 150–170 are disordered; it reads APTPVPPPTGTPRPLRPEACR. Residues 190-210 traverse the membrane as a helical segment; it reads IWAPLAGICAVLLLSLVITLI. Cys-211 is lipidated: S-palmitoyl cysteine. Over 211–236 the chain is Cytoplasmic; sequence CCHRNRRRVCKCPRPLVKPRPSEKFV.

Forms disulfide-linked heterodimers with CD8B at the cell surface. Also forms homodimers in several cell types including NK-cells or peripheral blood T-lymphocytes. Interacts with the MHC class I HLA-A/B2M dimer. Interacts with LCK in a zinc-dependent manner. Palmitoylated, but association with CD8B seems to be more important for the enrichment of CD8A in lipid rafts. In terms of processing, O-glycosylated. Post-translationally, phosphorylated in cytotoxic T-lymphocytes (CTLs) following activation.

Its subcellular location is the cell membrane. In terms of biological role, integral membrane glycoprotein that plays an essential role in the immune response and serves multiple functions in responses against both external and internal offenses. In T-cells, functions primarily as a coreceptor for MHC class I molecule:peptide complex. The antigens presented by class I peptides are derived from cytosolic proteins while class II derived from extracellular proteins. Interacts simultaneously with the T-cell receptor (TCR) and the MHC class I proteins presented by antigen presenting cells (APCs). In turn, recruits the Src kinase LCK to the vicinity of the TCR-CD3 complex. LCK then initiates different intracellular signaling pathways by phosphorylating various substrates ultimately leading to lymphokine production, motility, adhesion and activation of cytotoxic T-lymphocytes (CTLs). This mechanism enables CTLs to recognize and eliminate infected cells and tumor cells. In NK-cells, the presence of CD8A homodimers at the cell surface provides a survival mechanism allowing conjugation and lysis of multiple target cells. CD8A homodimer molecules also promote the survival and differentiation of activated lymphocytes into memory CD8 T-cells. The chain is T-cell surface glycoprotein CD8 alpha chain (Cd8a) from Rattus norvegicus (Rat).